Consider the following 272-residue polypeptide: Interleukin-2 receptor subunit alpha (272 aa).

The N-terminal stretch at 1 to 21 (MDPYLLMWGLLTFITVPGCQA) is a signal peptide. The Sushi 1 domain maps to 22–84 (ELCDDDPPKI…SWDNQCQCTS (63 aa)). Over 22 to 240 (ELCDDDPPKI…ETFIFTTEYQ (219 aa)) the chain is Extracellular. Disulfide bonds link C24-C67, C49-C80, and C51-C82. N-linked (GlcNAc...) asparagine glycosylation is found at N70 and N89. Positions 87-98 (ARNTTKQVTPQP) are enriched in polar residues. A disordered region spans residues 87–109 (ARNTTKQVTPQPEEQKERKTTEM). One can recognise a Sushi 2 domain in the interval 123-186 (GHCREPPPWE…WTQPQLICTG (64 aa)). Disulfide bonds link C125–C168 and C152–C184. A disordered region spans residues 186–213 (GETEPSQFPGEEEPQASPDGLPESETSR). Residues 241-259 (VAVAGCVFLLISVLLLSGL) form a helical membrane-spanning segment. Residues 260 to 272 (TWQRRQRKNRRTI) lie on the Cytoplasmic side of the membrane.

As to quaternary structure, non-covalent dimer of an alpha and a beta subunit. IL2R exists in 3 different forms: a high affinity dimer, an intermediate affinity monomer (beta subunit), and a low affinity monomer (alpha subunit). The high and intermediate affinity forms also associate with a gamma subunit.

It is found in the membrane. In terms of biological role, receptor for interleukin-2. The receptor is involved in the regulation of immune tolerance by controlling regulatory T cells (TREGs) activity. TREGs suppress the activation and expansion of autoreactive T-cells. This Macaca mulatta (Rhesus macaque) protein is Interleukin-2 receptor subunit alpha (IL2RA).